A 504-amino-acid polypeptide reads, in one-letter code: Protein phosphatase 1J (504 aa).

Disordered regions lie at residues 1-102 (MLNR…RLPW) and 194-217 (PLCL…SPQS). The segment covering 14–23 (SSSGTSSQRS) has biased composition (low complexity). Residue threonine 41 is modified to Phosphothreonine. A compositionally biased stretch (polar residues) spans 59–73 (TAETPVSFSRPTFLQ). Serine 65 and serine 75 each carry phosphoserine. The PPM-type phosphatase domain occupies 103 to 496 (STGYAEVINA…DDISVFVIPL (394 aa)). A compositionally biased stretch (low complexity) spans 197–217 (LPSTPGTPGVSSPSQLVSPQS).

The protein belongs to the PP2C family. In terms of assembly, interacts with UBE2I/UBC9.

It catalyses the reaction O-phospho-L-seryl-[protein] + H2O = L-seryl-[protein] + phosphate. The catalysed reaction is O-phospho-L-threonyl-[protein] + H2O = L-threonyl-[protein] + phosphate. This Rattus norvegicus (Rat) protein is Protein phosphatase 1J (Ppm1j).